A 183-amino-acid polypeptide reads, in one-letter code: MKLEESLKKCPVIKRGEYNYFVHPITDGIPLVEPSLLREVACRILKIVDFSEVDKIVTAEAMGIHLATTLSLYTDIPFVIIRKRSYGLEGEIPVFQKTGYSKGQLYVNGIKEGDKVVIVDDVISTGGTMIAIIEALKRAGAEIKDIVCVIERGKGREIVEKKTGYKIKTLVKIDVVDGKVVIK.

The protein belongs to the purine/pyrimidine phosphoribosyltransferase family. Archaeal HPRT subfamily. Homodimer.

It localises to the cytoplasm. The catalysed reaction is IMP + diphosphate = hypoxanthine + 5-phospho-alpha-D-ribose 1-diphosphate. It catalyses the reaction GMP + diphosphate = guanine + 5-phospho-alpha-D-ribose 1-diphosphate. Its pathway is purine metabolism; IMP biosynthesis via salvage pathway; IMP from hypoxanthine: step 1/1. Its function is as follows. Catalyzes a salvage reaction resulting in the formation of IMP that is energically less costly than de novo synthesis. The chain is Hypoxanthine/guanine phosphoribosyltransferase from Methanocaldococcus infernus (strain DSM 11812 / JCM 15783 / ME).